The primary structure comprises 709 residues: Leucine-rich repeat-containing protein 4B (709 aa).

The N-terminal stretch at 1 to 38 is a signal peptide; the sequence is MAQAHIQGSPCPLLPPGRMSWPQGALLLLWLFSPPLRA. Residues 50–88 enclose the LRRNT domain; the sequence is GGGSPPATSCPAACSCSNQASRVICTRRELAEVPASIPV. LRR repeat units lie at residues 89–110, 113–134, 137–158, 161–182, 185–207, 210–231, 232–253, 256–277, and 280–301; these read NTRY…TFKH, HLEI…AFNG, SLNT…AFEY, KLRE…AFNR, SLRR…AFEG, NLRY…TALV, RLEE…SFQG, SLRK…AFDD, and SLEE…LFTP. Residues 313-365 form the LRRCT domain; it reads NPWHCNCDVLWLSWWLKETVPSNTTCCARCHAPAGLKGRYIGELDQSHFTCYA. The Ig-like C2-type domain occupies 366 to 454; the sequence is PVIVEPPTDL…GNTTASATLN (89 aa). Residues Asn-376, Asn-402, Asn-424, Asn-427, and Asn-446 are each glycosylated (N-linked (GlcNAc...) asparagine). The cysteines at positions 387 and 438 are disulfide-linked. Positions 496–552 are disordered; that stretch reads TQPGEEAQQPRGTEKEPPGPTTDGAWGGGRPDAAAPASASTTAPAPRSSRPTEKAFT. Positions 528–544 are enriched in low complexity; it reads AAAPASASTTAPAPRSS. Residues 575–595 traverse the membrane as a helical segment; that stretch reads IIIGCFVAITFMAAVMLVAFY. Phosphoserine is present on Ser-689.

In terms of assembly, interacts with PTPRF. Interacts with DLG4. Post-translationally, N-glycosylated. O-glycosylated; contains sialic acid. In terms of tissue distribution, mainly expressed in the brain. Widespread distribution in various brain regions (at protein level). Detected both embryonically and postnatally with stronger expression in postnatal stages.

The protein localises to the membrane. Its subcellular location is the presynaptic cell membrane. In terms of biological role, synaptic adhesion protein. Regulates the formation of excitatory synapses. The trans-synaptic adhesion between LRRC4B and PTPRF regulates the formation of excitatory synapses in a bidirectional manner. The protein is Leucine-rich repeat-containing protein 4B (Lrrc4b) of Rattus norvegicus (Rat).